We begin with the raw amino-acid sequence, 184 residues long: Ribosome-recycling factor (184 aa).

It belongs to the RRF family.

The protein localises to the cytoplasm. Functionally, responsible for the release of ribosomes from messenger RNA at the termination of protein biosynthesis. May increase the efficiency of translation by recycling ribosomes from one round of translation to another. This is Ribosome-recycling factor from Acinetobacter baylyi (strain ATCC 33305 / BD413 / ADP1).